A 138-amino-acid chain; its full sequence is uncharacterized protein (138 aa).

The signal sequence occupies residues 1–37; sequence MNSTFTSQPLLNRSEPRVFKEFYRLVIGCNPAWQVMA.

This sequence to H.influenzae HI_1631.

This is an uncharacterized protein from Sinorhizobium fredii (strain NBRC 101917 / NGR234).